A 638-amino-acid polypeptide reads, in one-letter code: Phosphomethylpyrimidine synthase (638 aa).

Substrate contacts are provided by residues N243, M272, Y301, H337, 357–359 (SRG), 398–401 (DGLR), and E437. A Zn(2+)-binding site is contributed by H441. Residue Y464 coordinates substrate. H505 is a Zn(2+) binding site. Residues C585, C588, and C593 each coordinate [4Fe-4S] cluster.

Belongs to the ThiC family. Homodimer. It depends on [4Fe-4S] cluster as a cofactor.

The enzyme catalyses 5-amino-1-(5-phospho-beta-D-ribosyl)imidazole + S-adenosyl-L-methionine = 4-amino-2-methyl-5-(phosphooxymethyl)pyrimidine + CO + 5'-deoxyadenosine + formate + L-methionine + 3 H(+). It functions in the pathway cofactor biosynthesis; thiamine diphosphate biosynthesis. Functionally, catalyzes the synthesis of the hydroxymethylpyrimidine phosphate (HMP-P) moiety of thiamine from aminoimidazole ribotide (AIR) in a radical S-adenosyl-L-methionine (SAM)-dependent reaction. The polypeptide is Phosphomethylpyrimidine synthase (Azoarcus sp. (strain BH72)).